The following is a 934-amino-acid chain: MQRYELIRLIGKGGMGEVYLAHDKACSRRVALKRIREDLSGNALLRQRFLREAKIAADLIHPGIVPVYSICSDGEAVYYTMPYIEGFSLKSLLKSVWQKEVLSKELEEKTSVKSFLPIFDKICATVEYIHSKGVLHRDLKPDNILLGLFGEVVIIDWGAAIFKHAKELKLEQDDEAAVSFDERNICYSSMTIPGKIVGTPDYMAPESLLGVEASEKTDIYALGLILYQMLTLAFPYRRKKGRKLSYRDVVLPPIEMSPYREIPPSLSQIAMKAIAINPADRFSSIQELRQALQPYLQGDPEWTVKATLMAKEKSCWKYYDPILLSRYFPVLASSPAQWYNFMLSEVEISASTRVEYTVTKSAVHEGMGILFLPSKEAERGEFYCGYGLWFSVQNHELTVSLIKNGIEIQKKSQEMISQQSRFAILIEKSDNRIAVFVEQALFILHIDYLPSLGNRLGVIIQDLQGMSNIAISESIGALRVSCLAVPDAFLSEKLYDQAAIFYRKIRDSFPGRKESYEAQFRLGVTLLTQIEEQGGDLTQALSSFDYLHGGAGAPLEYLGKALVYQRNGSFVEEIRCLLFALKRYSQHPEIPRLEDHLCFRLYDSLHKHRSEALVFMLLILWIAPEKISVREEERFLRIIYHKQQATLFCQVDKAPLQFRSSKMELFLSFWTGFSLFLPELFRRAGGLRDYQALADIFYVAGVSGNREAFMQFSTALANVSDEITFPESLHNQKVAELMFFVKGVEALRNKDYQKAKKLLWKTPFTLQLYALDMFHIQAFLDEEIESFIDLLQAIYDPASEEERDHILVYIIQTHLWNRDLERAYKLLNDRFPLDEELAEYSEAFILWGCYLALTGDRVVVKAHFSRCRYKYGKSALIGKCVDGDIFDYLDNLVWWEKKMTLFQSYFLLRCLNESPRRYEKYRQAYLSMENNFFD.

One can recognise a Protein kinase domain in the interval 4 to 296; sequence YELIRLIGKG…ELRQALQPYL (293 aa). Residues 10 to 18 and Lys33 each bind ATP; that span reads IGKGGMGEV. Residue Asp138 is the Proton acceptor of the active site.

The protein belongs to the protein kinase superfamily. Ser/Thr protein kinase family. Interacts with Pkn1. In terms of processing, autophosphorylated on serine and threonine residues.

It carries out the reaction L-seryl-[protein] + ATP = O-phospho-L-seryl-[protein] + ADP + H(+). The enzyme catalyses L-threonyl-[protein] + ATP = O-phospho-L-threonyl-[protein] + ADP + H(+). In terms of biological role, together with the serine/threonine kinase Pkn1, may play a role in the specific interactions with host proteins during intracellular growth. Autophosphorylates and also phosphorylates Pkn1. In Chlamydia trachomatis serovar D (strain ATCC VR-885 / DSM 19411 / UW-3/Cx), this protein is Serine/threonine-protein kinase PknD.